A 164-amino-acid polypeptide reads, in one-letter code: Telomerase-associated protein of 19 kDa (164 aa).

Component of the telomerase holoenzyme complex, composed of the catalytic core (the catalytic subunit TERT, the telomerase RNA template component TER and TAP65/p65), which is associated with two heterotrimeric subcomplexes: (i) the replication protein A (RPA)-related subcomplex, composed of TEB1, RPA2/TEB2 and RPA3/TEB3 and (ii) the CST-like subcomplex, composed of TAP75/p75, TAP45/p45 and TAP19/p19. TEB1 and the CST-like subcomplex are tethered to the catalytic core by TAP50/p50.

It is found in the chromosome. The protein resides in the telomere. Its function is as follows. Component of a CST-like subcomplex of the holoenzyme telomerase ribonucleoprotein complex, which stimulates telomerase complementary-strand synthesis. Telomerase is an essential ribonucleoprotein enzyme that copies new telomeric repeats onto chromosome ends by repetitively synthesizing the short telomere-repeat sequence 5'-TTGGGG-3' using an RNA template component TER. The CST-like subcomplex (also named 7-4-1) binds telomeric single-stranded DNA and coordinates telomere G-strand and C-strand synthesis. This Tetrahymena thermophila (strain SB210) protein is Telomerase-associated protein of 19 kDa.